Here is a 591-residue protein sequence, read N- to C-terminus: V-type ATP synthase alpha chain (591 aa).

233–240 is an ATP binding site; sequence GPFGAGKT.

This sequence belongs to the ATPase alpha/beta chains family.

The enzyme catalyses ATP + H2O + 4 H(+)(in) = ADP + phosphate + 5 H(+)(out). Produces ATP from ADP in the presence of a proton gradient across the membrane. The V-type alpha chain is a catalytic subunit. This is V-type ATP synthase alpha chain from Streptococcus pneumoniae (strain Hungary19A-6).